The following is an 88-amino-acid chain: DNA-directed RNA polymerase subunit omega (88 aa).

Belongs to the RNA polymerase subunit omega family. The RNAP catalytic core consists of 2 alpha, 1 beta, 1 beta' and 1 omega subunit. When a sigma factor is associated with the core the holoenzyme is formed, which can initiate transcription.

It catalyses the reaction RNA(n) + a ribonucleoside 5'-triphosphate = RNA(n+1) + diphosphate. Its function is as follows. Promotes RNA polymerase assembly. Latches the N- and C-terminal regions of the beta' subunit thereby facilitating its interaction with the beta and alpha subunits. The protein is DNA-directed RNA polymerase subunit omega of Kineococcus radiotolerans (strain ATCC BAA-149 / DSM 14245 / SRS30216).